A 551-amino-acid chain; its full sequence is Cleavage and polyadenylation specificity factor subunit 6 (551 aa).

A necessary for interaction with NXF1 region spans residues 1 to 213; it reads MADGVDHIDI…RGRFPGAVPG (213 aa). The RRM domain occupies 81-161; the sequence is IALYIGNLTW…QNPVVTPCNK (81 aa). Residues 81–161 form a necessary for interaction with NUDT21/CPSF5 region; sequence IALYIGNLTW…QNPVVTPCNK (81 aa). Positions 81–161 are necessary for nuclear paraspeckles localization; sequence IALYIGNLTW…QNPVVTPCNK (81 aa). A Phosphothreonine modification is found at Thr-157. Over residues 169–180 the composition is skewed to polar residues; that stretch reads MQSRKTTQSGQM. Disordered stretches follow at residues 169 to 411 and 477 to 551; these read MQSR…PLSE and LHGI…YRHR. The GAR signature appears at 202-206; sequence RGRGR. Residues 207 to 219 show a composition bias toward low complexity; that stretch reads FPGAVPGGDRFPG. 3 stretches are compositionally biased toward pro residues: residues 220-265, 285-366, and 377-388; these read PAGP…PLAG, GQPP…PPPT, and GPPPTDPYGRPP. Residues 358 to 551 form a (Microbial infection) Binds to HIV-1 capsid protein p24 (CA) region; it reads NPAFFPPPTN…RDREREYRHR (194 aa). The span at 389–404 shows a compositional bias: basic and acidic residues; the sequence is PYDRGDYGPPGREMDT. Thr-404 and Thr-407 each carry phosphothreonine. Residues 404 to 551 are sufficient for nuclear speckle localization; that stretch reads TARTPLSEAE…RDREREYRHR (148 aa). The tract at residues 405-551 is necessary for RNA-binding; that stretch reads ARTPLSEAEF…RDREREYRHR (147 aa). The necessary for interaction with SRSF3, SRSF7 and TRA2B/SFRS10 stretch occupies residues 481–551; the sequence is ESKSYGSGSR…RDREREYRHR (71 aa). The span at 489-503 shows a compositional bias: basic and acidic residues; the sequence is SRRERSRERDHSRSR. The arg/Ser-rich domain stretch occupies residues 490 to 551; that stretch reads RRERSRERDH…RDREREYRHR (62 aa). 5 positions are modified to phosphoserine: Ser-494, Ser-500, Ser-511, Ser-513, and Ser-525. The segment covering 504–514 has biased composition (basic residues); that stretch reads EKSRRHKSRSR. The interval 510–551 is sufficient for nuclear targeting; that stretch reads KSRSRDRHDDYYRERSRERERHRDRDRDRDRERDREREYRHR. Residues 515–551 show a composition bias toward basic and acidic residues; the sequence is DRHDDYYRERSRERERHRDRDRDRDRERDREREYRHR.

It belongs to the RRM CPSF6/7 family. As to quaternary structure, component of the cleavage factor Im (CFIm) complex which is a heterotetramer composed of two subunits of NUDT21/CPSF5 and two subunits of CPSF6 or CPSF7 or a heterodimer of CPSF6 and CPSF7. The cleavage factor Im (CFIm) complex associates with the CPSF and CSTF complexes to promote the assembly of the core mRNA 3'-processing machinery. Associates with the exon junction complex (EJC). Associates with the 80S ribosome particle. Interacts (via the RRM domain) with NUDT21/CPSF5; this interaction is direct and enhances binding to RNA. Interacts (via Arg/Ser-rich domain) with FIP1L1 (preferentially via unphosphorylated form and Arg/Glu/Asp-rich domain); this interaction mediates, at least in part, the interaction between the CFIm and CPSF complexes and may be inhibited by CPSF6 hyper-phosphorylation. Interacts (via N-terminus) with NXF1; this interaction is direct. Interacts with SRSF3. Interacts with SRSF7. Interacts with SNRNP70. Interacts with TRA2B/SFRS10. Interacts with UPF1. Interacts with UPF3B. Interacts with VIRMA. Interacts (via Arg/Ser-rich domain) with TNPO3; promoting nuclear import of CPSF6 independently of its phosphorylation status. Interacts with YTHDC1. (Microbial infection) Interacts (via C-terminus) with HIV-1 capsid protein p24 (CA). Post-translationally, phosphorylated. Phosphorylated in the Arg/Ser-rich domain by SRPK1, in vitro. In terms of processing, symmetrically dimethylated on arginine residues in the GAR motif by PRMT5 in a WDR77- and CLNS1A-dependent manner. Asymmetrically dimethylated on arginine residues in the GAR motif by PRMT1.

The protein resides in the nucleus. It is found in the nucleoplasm. The protein localises to the nucleus speckle. It localises to the cytoplasm. Component of the cleavage factor Im (CFIm) complex that functions as an activator of the pre-mRNA 3'-end cleavage and polyadenylation processing required for the maturation of pre-mRNA into functional mRNAs. CFIm contributes to the recruitment of multiprotein complexes on specific sequences on the pre-mRNA 3'-end, so called cleavage and polyadenylation signals (pA signals). Most pre-mRNAs contain multiple pA signals, resulting in alternative cleavage and polyadenylation (APA) producing mRNAs with variable 3'-end formation. The CFIm complex acts as a key regulator of cleavage and polyadenylation site choice during APA through its binding to 5'-UGUA-3' elements localized in the 3'-untranslated region (UTR) for a huge number of pre-mRNAs. CPSF6 enhances NUDT21/CPSF5 binding to 5'-UGUA-3' elements localized upstream of pA signals and promotes RNA looping, and hence activates directly the mRNA 3'-processing machinery. Plays a role in mRNA export. Functionally, (Microbial infection) Binds HIV-1 capsid-nucleocapsid (HIV-1 CA-NC) complexes and might thereby promote the integration of the virus in the nucleus of dividing cells (in vitro). This is Cleavage and polyadenylation specificity factor subunit 6 from Homo sapiens (Human).